Here is a 368-residue protein sequence, read N- to C-terminus: Probable staphylococcal-like nuclease CAN2 (368 aa).

G2 carries the N-myristoyl glycine lipid modification. C7 carries the S-palmitoyl cysteine lipid modification. The interval 16–56 (DHYPYYKPTSRPHYQPPHYHGQPAAPPAPLQQQHLGPHGVT) is disordered. Positions 27–38 (PHYQPPHYHGQP) are enriched in low complexity. A TNase-like domain is found at 168–344 (NTLPVYDKCI…RAANRGLWAS (177 aa)). Residue D181 coordinates Ca(2+). The active site involves R251. Residue D256 participates in Ca(2+) binding. Catalysis depends on residues E259 and R293.

Belongs to the thermonuclease family. Ca(2+) serves as cofactor.

The protein localises to the cell membrane. Its function is as follows. Enzyme that catalyzes the hydrolysis of both DNA and RNA at the 5' position of the phosphodiester bond. This is Probable staphylococcal-like nuclease CAN2 from Oryza sativa subsp. japonica (Rice).